The following is a 90-amino-acid chain: MAHMVKCVKLGREAEGLEEPPFDSELGQKIYNNVSAEAWRGWTEHQKMLLNEYRLQPWKKEHQEFLVQQMEAYFFGEGSEAPKEFVPPSH.

This sequence belongs to the Fe(2+)-trafficking protein family.

Its function is as follows. Could be a mediator in iron transactions between iron acquisition and iron-requiring processes, such as synthesis and/or repair of Fe-S clusters in biosynthetic enzymes. This is Probable Fe(2+)-trafficking protein from Koribacter versatilis (strain Ellin345).